The following is a 20-amino-acid chain: Ranalexin-1Ca (20 aa).

A disulfide bridge links Cys-14 with Cys-20.

In terms of tissue distribution, expressed by the skin glands.

The protein resides in the secreted. In terms of biological role, antibacterial activity against Gram-positive bacterium S.aureus (MIC=17 uM) and Gram-negative bacterium E.coli (MIC=4 uM). Has activity against C.albicans (MIC=14 uM). The polypeptide is Ranalexin-1Ca (Lithobates clamitans (Green frog)).